The chain runs to 707 residues: DNA ligase (707 aa).

NAD(+) contacts are provided by residues 36–40 (DADFD), 85–86 (SL), and Glu116. Lys118 (N6-AMP-lysine intermediate) is an active-site residue. Positions 139, 180, 298, and 322 each coordinate NAD(+). Residues Cys416, Cys419, Cys434, and Cys440 each contribute to the Zn(2+) site. One can recognise a BRCT domain in the interval 613–707 (AASSKIAGRS…STHVDPERMV (95 aa)).

The protein belongs to the NAD-dependent DNA ligase family. LigA subfamily. The cofactor is Mg(2+). It depends on Mn(2+) as a cofactor.

The catalysed reaction is NAD(+) + (deoxyribonucleotide)n-3'-hydroxyl + 5'-phospho-(deoxyribonucleotide)m = (deoxyribonucleotide)n+m + AMP + beta-nicotinamide D-nucleotide.. Its function is as follows. DNA ligase that catalyzes the formation of phosphodiester linkages between 5'-phosphoryl and 3'-hydroxyl groups in double-stranded DNA using NAD as a coenzyme and as the energy source for the reaction. It is essential for DNA replication and repair of damaged DNA. The sequence is that of DNA ligase from Nitrosospira multiformis (strain ATCC 25196 / NCIMB 11849 / C 71).